The primary structure comprises 216 residues: Ribosomal RNA large subunit methyltransferase E (216 aa).

Positions 60, 62, 80, 96, and 121 each coordinate S-adenosyl-L-methionine. Lysine 161 functions as the Proton acceptor in the catalytic mechanism.

Belongs to the class I-like SAM-binding methyltransferase superfamily. RNA methyltransferase RlmE family.

The protein resides in the cytoplasm. It carries out the reaction uridine(2552) in 23S rRNA + S-adenosyl-L-methionine = 2'-O-methyluridine(2552) in 23S rRNA + S-adenosyl-L-homocysteine + H(+). Functionally, specifically methylates the uridine in position 2552 of 23S rRNA at the 2'-O position of the ribose in the fully assembled 50S ribosomal subunit. This Pseudomonas syringae pv. syringae (strain B728a) protein is Ribosomal RNA large subunit methyltransferase E.